We begin with the raw amino-acid sequence, 385 residues long: MAKHLFTSESVSEGHPDKIADQISDTVLDAILAQDLKARVACETYVKTGMVLVGGEITTNAWIDIEELTRNTIRDIGYTNSEMKFDANSCAVLSIISKQSPDINKGINNIDPREQGAGDQGFMFGYATNETDVLMPAPITYAHRLVARQSLVRKNGTLPWLCPDAKSQVTFAYDEGKVVGIDTVVFSTQHVENITLPNLKEAVMEEIIKPVLPIELLSEHTKFFINPTGRFVVGGPMGDCGLTGRKIIVDTYGGMARHGGGAFSGKDPSKVDRSAAYAARYVAKNIVAAGLAEKCEIQVSYAIGIAEPTSITIETFGTEKISADHLTALVNEFFDLRPYSLITMLNLLQPIYRETATYGHFGREHFPWEKTDKAILLRDAASXIC.

H15 is a binding site for ATP. D17 contributes to the Mg(2+) binding site. E43 provides a ligand contact to K(+). L-methionine is bound by residues E56 and Q99. Residues 99 to 109 (QSPDINKGINN) are flexible loop. Residues 164 to 166 (DAK), 230 to 231 (RF), D239, 245 to 246 (RK), A262, and K266 each bind ATP. Position 239 (D239) interacts with L-methionine. Residue K270 coordinates L-methionine.

Belongs to the AdoMet synthase family. Homotetramer; dimer of dimers. It depends on Mg(2+) as a cofactor. Requires K(+) as cofactor.

Its subcellular location is the cytoplasm. It catalyses the reaction L-methionine + ATP + H2O = S-adenosyl-L-methionine + phosphate + diphosphate. The protein operates within amino-acid biosynthesis; S-adenosyl-L-methionine biosynthesis; S-adenosyl-L-methionine from L-methionine: step 1/1. In terms of biological role, catalyzes the formation of S-adenosylmethionine (AdoMet) from methionine and ATP. The overall synthetic reaction is composed of two sequential steps, AdoMet formation and the subsequent tripolyphosphate hydrolysis which occurs prior to release of AdoMet from the enzyme. This chain is S-adenosylmethionine synthase, found in Baumannia cicadellinicola subsp. Homalodisca coagulata.